The following is a 245-amino-acid chain: Uridylate kinase (245 aa).

12–15 contributes to the ATP binding site; the sequence is KLSG. The involved in allosteric activation by GTP stretch occupies residues 20–25; that stretch reads GEKGVG. A UMP-binding site is contributed by Gly54. The ATP site is built by Gly55 and Arg59. UMP is bound by residues Asp74 and 135-142; that span reads IGSPYFST. The ATP site is built by Asn163, Tyr169, and Asp172.

It belongs to the UMP kinase family. As to quaternary structure, homohexamer.

The protein localises to the cytoplasm. The catalysed reaction is UMP + ATP = UDP + ADP. Its pathway is pyrimidine metabolism; CTP biosynthesis via de novo pathway; UDP from UMP (UMPK route): step 1/1. Allosterically activated by GTP. Inhibited by UTP. Catalyzes the reversible phosphorylation of UMP to UDP. The polypeptide is Uridylate kinase (Streptococcus thermophilus (strain ATCC BAA-250 / LMG 18311)).